The chain runs to 111 residues: Nucleoid-associated protein VF_1686 (111 aa).

Disordered regions lie at residues 1–23 (MFGG…DRMQ) and 89–111 (TQKE…KMPF).

It belongs to the YbaB/EbfC family. In terms of assembly, homodimer.

The protein localises to the cytoplasm. It is found in the nucleoid. Binds to DNA and alters its conformation. May be involved in regulation of gene expression, nucleoid organization and DNA protection. This is Nucleoid-associated protein VF_1686 from Aliivibrio fischeri (strain ATCC 700601 / ES114) (Vibrio fischeri).